The following is a 251-amino-acid chain: Imidazole glycerol phosphate synthase subunit HisF (251 aa).

Residues aspartate 13 and aspartate 132 contribute to the active site.

The protein belongs to the HisA/HisF family. As to quaternary structure, heterodimer of HisH and HisF.

It localises to the cytoplasm. The catalysed reaction is 5-[(5-phospho-1-deoxy-D-ribulos-1-ylimino)methylamino]-1-(5-phospho-beta-D-ribosyl)imidazole-4-carboxamide + L-glutamine = D-erythro-1-(imidazol-4-yl)glycerol 3-phosphate + 5-amino-1-(5-phospho-beta-D-ribosyl)imidazole-4-carboxamide + L-glutamate + H(+). It functions in the pathway amino-acid biosynthesis; L-histidine biosynthesis; L-histidine from 5-phospho-alpha-D-ribose 1-diphosphate: step 5/9. Its function is as follows. IGPS catalyzes the conversion of PRFAR and glutamine to IGP, AICAR and glutamate. The HisF subunit catalyzes the cyclization activity that produces IGP and AICAR from PRFAR using the ammonia provided by the HisH subunit. The sequence is that of Imidazole glycerol phosphate synthase subunit HisF from Campylobacter concisus (strain 13826).